The sequence spans 245 residues: 2,3-bisphosphoglycerate-dependent phosphoglycerate mutase (245 aa).

Substrate contacts are provided by residues 8–15 (RHGQSLWN), 21–22 (TG), R60, 87–90 (ERHY), K98, 114–115 (RR), and 183–184 (GN). H9 acts as the Tele-phosphohistidine intermediate in catalysis. Residue E87 is the Proton donor/acceptor of the active site.

It belongs to the phosphoglycerate mutase family. BPG-dependent PGAM subfamily.

It catalyses the reaction (2R)-2-phosphoglycerate = (2R)-3-phosphoglycerate. The protein operates within carbohydrate degradation; glycolysis; pyruvate from D-glyceraldehyde 3-phosphate: step 3/5. Its function is as follows. Catalyzes the interconversion of 2-phosphoglycerate and 3-phosphoglycerate. The chain is 2,3-bisphosphoglycerate-dependent phosphoglycerate mutase from Bacillus mycoides (strain KBAB4) (Bacillus weihenstephanensis).